The chain runs to 279 residues: Fatty acid metabolism regulator protein (279 aa).

An HTH gntR-type domain is found at 6–74 (KSPAGFAEKY…HGKPTKVNQF (69 aa)). A DNA-binding region (H-T-H motif) is located at residues 34-53 (ERELSELIGVTRTTLREVLQ).

As to quaternary structure, homodimer.

It localises to the cytoplasm. Multifunctional regulator of fatty acid metabolism. This chain is Fatty acid metabolism regulator protein, found in Vibrio cholerae serotype O1 (strain ATCC 39541 / Classical Ogawa 395 / O395).